The sequence spans 198 residues: Ribonuclease HII (198 aa).

The RNase H type-2 domain occupies 1-198; it reads MLCGIDEAGR…QRRSFFVKNL (198 aa). A divalent metal cation contacts are provided by Asp-6, Glu-7, and Asp-112.

It belongs to the RNase HII family. The cofactor is Mn(2+). Mg(2+) serves as cofactor.

Its subcellular location is the cytoplasm. The catalysed reaction is Endonucleolytic cleavage to 5'-phosphomonoester.. Functionally, endonuclease that specifically degrades the RNA of RNA-DNA hybrids. This Treponema denticola (strain ATCC 35405 / DSM 14222 / CIP 103919 / JCM 8153 / KCTC 15104) protein is Ribonuclease HII.